The chain runs to 319 residues: uncharacterized protein (319 aa).

Low complexity predominate over residues 268–312 (SSVVAVTHPPSTTSTTTSVSETLSSFIAPSDLSSQPSPSSHPSSP). A disordered region spans residues 268–319 (SSVVAVTHPPSTTSTTTSVSETLSSFIAPSDLSSQPSPSSHPSSPFGNHNEF).

This is an uncharacterized protein from Lepidoptera (butterflies and moths).